The chain runs to 210 residues: uncharacterized protein (210 aa).

It to E.coli YkgK.

This is an uncharacterized protein from Escherichia coli (strain K12).